The chain runs to 320 residues: L-lactate dehydrogenase (320 aa).

Residues Val-19, Asp-40, Arg-45, and 85–86 contribute to the NAD(+) site; that span reads GA. Gln-88 and Arg-94 together coordinate substrate. Residues Ser-107, 124–126, and Ser-149 each bind NAD(+); that span reads ITN. 126-129 is a binding site for substrate; that stretch reads NPVD. Residue 154–157 participates in substrate binding; that stretch reads DSAR. Beta-D-fructose 1,6-bisphosphate contacts are provided by Arg-159 and His-174. His-181 acts as the Proton acceptor in catalysis. Phosphotyrosine is present on Tyr-228. A substrate-binding site is contributed by Thr-237.

Belongs to the LDH/MDH superfamily. LDH family. Homotetramer.

The protein localises to the cytoplasm. It catalyses the reaction (S)-lactate + NAD(+) = pyruvate + NADH + H(+). The protein operates within fermentation; pyruvate fermentation to lactate; (S)-lactate from pyruvate: step 1/1. With respect to regulation, allosterically activated by fructose 1,6-bisphosphate (FBP). Functionally, catalyzes the conversion of lactate to pyruvate. This is L-lactate dehydrogenase from Bifidobacterium animalis subsp. lactis (strain AD011).